A 335-amino-acid chain; its full sequence is Glycerol-3-phosphate dehydrogenase [NAD(P)+] (335 aa).

NADPH-binding residues include tryptophan 15, arginine 36, and lysine 109. Lysine 109, glycine 137, and serine 139 together coordinate sn-glycerol 3-phosphate. Alanine 141 contributes to the NADPH binding site. The sn-glycerol 3-phosphate site is built by lysine 192, aspartate 245, serine 255, arginine 256, and asparagine 257. The Proton acceptor role is filled by lysine 192. Arginine 256 is a binding site for NADPH. Residues leucine 279 and glutamate 281 each contribute to the NADPH site.

Belongs to the NAD-dependent glycerol-3-phosphate dehydrogenase family.

The protein localises to the cytoplasm. The enzyme catalyses sn-glycerol 3-phosphate + NAD(+) = dihydroxyacetone phosphate + NADH + H(+). The catalysed reaction is sn-glycerol 3-phosphate + NADP(+) = dihydroxyacetone phosphate + NADPH + H(+). The protein operates within membrane lipid metabolism; glycerophospholipid metabolism. Catalyzes the reduction of the glycolytic intermediate dihydroxyacetone phosphate (DHAP) to sn-glycerol 3-phosphate (G3P), the key precursor for phospholipid synthesis. The chain is Glycerol-3-phosphate dehydrogenase [NAD(P)+] from Beijerinckia indica subsp. indica (strain ATCC 9039 / DSM 1715 / NCIMB 8712).